Here is a 197-residue protein sequence, read N- to C-terminus: uncharacterized protein (197 aa).

Residues 150 to 172 (SLKLNTTLPMFALNLICLLRSIL) form a helical membrane-spanning segment.

It is found in the membrane. This is an uncharacterized protein from Saccharomyces cerevisiae (strain ATCC 204508 / S288c) (Baker's yeast).